Reading from the N-terminus, the 331-residue chain is Beta-ketoacyl-[acyl-carrier-protein] synthase III (331 aa).

Active-site residues include Cys115 and His255. An ACP-binding region spans residues 256-260 (QANFR). The active site involves Asn285.

It belongs to the thiolase-like superfamily. FabH family. As to quaternary structure, homodimer.

It localises to the cytoplasm. The catalysed reaction is malonyl-[ACP] + acetyl-CoA + H(+) = 3-oxobutanoyl-[ACP] + CO2 + CoA. The protein operates within lipid metabolism; fatty acid biosynthesis. Catalyzes the condensation reaction of fatty acid synthesis by the addition to an acyl acceptor of two carbons from malonyl-ACP. Catalyzes the first condensation reaction which initiates fatty acid synthesis and may therefore play a role in governing the total rate of fatty acid production. Possesses both acetoacetyl-ACP synthase and acetyl transacylase activities. Its substrate specificity determines the biosynthesis of branched-chain and/or straight-chain of fatty acids. This chain is Beta-ketoacyl-[acyl-carrier-protein] synthase III, found in Helicobacter pylori (strain ATCC 700392 / 26695) (Campylobacter pylori).